The sequence spans 125 residues: Small ribosomal subunit protein uS12 (125 aa).

Asp89 carries the 3-methylthioaspartic acid modification.

It belongs to the universal ribosomal protein uS12 family. Part of the 30S ribosomal subunit. Contacts proteins S8 and S17. May interact with IF1 in the 30S initiation complex.

Its function is as follows. With S4 and S5 plays an important role in translational accuracy. In terms of biological role, interacts with and stabilizes bases of the 16S rRNA that are involved in tRNA selection in the A site and with the mRNA backbone. Located at the interface of the 30S and 50S subunits, it traverses the body of the 30S subunit contacting proteins on the other side and probably holding the rRNA structure together. The combined cluster of proteins S8, S12 and S17 appears to hold together the shoulder and platform of the 30S subunit. In Clostridium botulinum (strain Alaska E43 / Type E3), this protein is Small ribosomal subunit protein uS12.